Consider the following 322-residue polypeptide: tRNA U34 carboxymethyltransferase (322 aa).

Residues Lys-91, Trp-105, Lys-110, Gly-129, Met-195, Tyr-199, and Arg-314 each coordinate carboxy-S-adenosyl-L-methionine.

This sequence belongs to the class I-like SAM-binding methyltransferase superfamily. CmoB family. Homotetramer.

It catalyses the reaction carboxy-S-adenosyl-L-methionine + 5-hydroxyuridine(34) in tRNA = 5-carboxymethoxyuridine(34) in tRNA + S-adenosyl-L-homocysteine + H(+). Functionally, catalyzes carboxymethyl transfer from carboxy-S-adenosyl-L-methionine (Cx-SAM) to 5-hydroxyuridine (ho5U) to form 5-carboxymethoxyuridine (cmo5U) at position 34 in tRNAs. This chain is tRNA U34 carboxymethyltransferase, found in Ectopseudomonas mendocina (strain ymp) (Pseudomonas mendocina).